The following is a 727-amino-acid chain: Catalase-peroxidase (727 aa).

A disordered region spans residues 1 to 26; the sequence is MDTKVETGGKCPVAHGPAGAKGRGNR. The segment at residues 97 to 219 is a cross-link (tryptophyl-tyrosyl-methioninium (Trp-Tyr) (with M-245)); sequence WHSAGTYRIT…LGAVQMGLIY (123 aa). The Proton acceptor role is filled by histidine 98. Residues 219 to 245 constitute a cross-link (tryptophyl-tyrosyl-methioninium (Tyr-Met) (with W-97)); the sequence is YVNPEGPNGNPDPIAAARDIRETFSRM. Residue histidine 260 coordinates heme b.

It belongs to the peroxidase family. Peroxidase/catalase subfamily. As to quaternary structure, homodimer or homotetramer. Heme b serves as cofactor. In terms of processing, formation of the three residue Trp-Tyr-Met cross-link is important for the catalase, but not the peroxidase activity of the enzyme.

The catalysed reaction is H2O2 + AH2 = A + 2 H2O. The enzyme catalyses 2 H2O2 = O2 + 2 H2O. In terms of biological role, bifunctional enzyme with both catalase and broad-spectrum peroxidase activity. This chain is Catalase-peroxidase, found in Allorhizobium ampelinum (strain ATCC BAA-846 / DSM 112012 / S4) (Agrobacterium vitis (strain S4)).